Consider the following 734-residue polypeptide: Photosystem I P700 chlorophyll a apoprotein A2 (734 aa).

Helical transmembrane passes span 46–69, 135–158, 175–199, 273–291, 330–353, 369–395, 417–439, and 517–535; these read IFAS…FHVA, LYTG…LHLQ, LNHH…HVAI, MAHH…GHMY, LHFQ…QHMY, AALY…IFFI, AIIS…LYVH, and FLVH…LILV. [4Fe-4S] cluster-binding residues include Cys-559 and Cys-568. The next 2 membrane-spanning stretches (helical) occupy residues 575–596 and 643–665; these read AFYL…YWHW and LSVW…MFLI. Positions 654, 662, and 670 each coordinate chlorophyll a. Residue Trp-671 coordinates phylloquinone. A helical membrane pass occupies residues 707–727; that stretch reads LVGLAHFSVGYIFTYAAFLIA.

Belongs to the PsaA/PsaB family. As to quaternary structure, the PsaA/B heterodimer binds the P700 chlorophyll special pair and subsequent electron acceptors. PSI consists of a core antenna complex that captures photons, and an electron transfer chain that converts photonic excitation into a charge separation. The eukaryotic PSI reaction center is composed of at least 11 subunits. P700 is a chlorophyll a/chlorophyll a' dimer, A0 is one or more chlorophyll a, A1 is one or both phylloquinones and FX is a shared 4Fe-4S iron-sulfur center. serves as cofactor.

Its subcellular location is the plastid. It localises to the chloroplast thylakoid membrane. It carries out the reaction reduced [plastocyanin] + hnu + oxidized [2Fe-2S]-[ferredoxin] = oxidized [plastocyanin] + reduced [2Fe-2S]-[ferredoxin]. Its function is as follows. PsaA and PsaB bind P700, the primary electron donor of photosystem I (PSI), as well as the electron acceptors A0, A1 and FX. PSI is a plastocyanin-ferredoxin oxidoreductase, converting photonic excitation into a charge separation, which transfers an electron from the donor P700 chlorophyll pair to the spectroscopically characterized acceptors A0, A1, FX, FA and FB in turn. Oxidized P700 is reduced on the lumenal side of the thylakoid membrane by plastocyanin. The polypeptide is Photosystem I P700 chlorophyll a apoprotein A2 (Cucumis sativus (Cucumber)).